A 269-amino-acid chain; its full sequence is Regulatory protein RecX (269 aa).

This sequence belongs to the RecX family.

It is found in the cytoplasm. Functionally, modulates RecA activity. This is Regulatory protein RecX from Geobacillus kaustophilus (strain HTA426).